The following is a 283-amino-acid chain: Aspartate dehydrogenase domain-containing protein (283 aa).

Residues S20 and S168 each carry the phosphoserine modification.

It belongs to the L-aspartate dehydrogenase family.

This is Aspartate dehydrogenase domain-containing protein from Homo sapiens (Human).